We begin with the raw amino-acid sequence, 132 residues long: D-ribose pyranase (132 aa).

H20 serves as the catalytic Proton donor. Substrate-binding positions include D28, H99, and Y121 to N123.

Belongs to the RbsD / FucU family. RbsD subfamily. As to quaternary structure, homodecamer.

It localises to the cytoplasm. It catalyses the reaction beta-D-ribopyranose = beta-D-ribofuranose. Its pathway is carbohydrate metabolism; D-ribose degradation; D-ribose 5-phosphate from beta-D-ribopyranose: step 1/2. Functionally, catalyzes the interconversion of beta-pyran and beta-furan forms of D-ribose. This chain is D-ribose pyranase, found in Pseudomonas putida (strain GB-1).